A 655-amino-acid polypeptide reads, in one-letter code: Phosphatidylinositol-3,5-bisphosphate 3-phosphatase MTMR6 (655 aa).

The region spanning 1 to 101 is the GRAM domain; that stretch reads MEHIRTTKVE…YNSLLQLSKQ (101 aa). Positions 2–141 are interaction with RAB1B; the sequence is EHIRTTKVEQ…AEYERMGVPN (140 aa). Y108 carries the post-translational modification Phosphotyrosine. The Myotubularin phosphatase domain maps to 124 to 537; that stretch reads GWQLIDLAAE…FNFKFWRNMY (414 aa). The a 1,2-diacyl-sn-glycero-3-phospho-(1D-myo-inositol-3,5-bisphosphate) site is built by N286, N311, and I312. A 1,2-diacyl-sn-glycero-3-phospho-(1D-myo-inositol-3-phosphate) contacts are provided by N286, N311, and I312. The active-site Phosphocysteine intermediate is the C374. Positions 375, 376, 377, 378, 379, 380, 416, and 420 each coordinate a 1,2-diacyl-sn-glycero-3-phospho-(1D-myo-inositol-3,5-bisphosphate). The a 1,2-diacyl-sn-glycero-3-phospho-(1D-myo-inositol-3-phosphate) site is built by S375, D376, G377, W378, D379, and R380. R420 contributes to the a 1,2-diacyl-sn-glycero-3-phospho-(1D-myo-inositol-3-phosphate) binding site. Residues 547 to 581 adopt a coiled-coil conformation; it reads RQSVLNIIMNMNEQNKQLEEDVKDLEAKIKQCKSG. Phosphoserine is present on residues S595, S623, and S645.

This sequence belongs to the protein-tyrosine phosphatase family. Non-receptor class myotubularin subfamily. As to quaternary structure, homodimer. Heterodimer (via C-terminus) with MTMR9 (via C-terminus). Interacts with ALKBH4. Interacts with KCNN4. Interacts (via GRAM domain) with RAB1B (in GDP-bound form); the interaction regulates MTMR6 recruitment to the endoplasmic reticulum-Golgi intermediate compartment.

The protein resides in the cytoplasm. Its subcellular location is the endoplasmic reticulum. The protein localises to the cell projection. It localises to the ruffle membrane. It is found in the endoplasmic reticulum-Golgi intermediate compartment. The protein resides in the perinuclear region. The catalysed reaction is a 1,2-diacyl-sn-glycero-3-phospho-(1D-myo-inositol-3,5-bisphosphate) + H2O = a 1,2-diacyl-sn-glycero-3-phospho-(1D-myo-inositol-5-phosphate) + phosphate. It catalyses the reaction a 1,2-diacyl-sn-glycero-3-phospho-(1D-myo-inositol-3-phosphate) + H2O = a 1,2-diacyl-sn-glycero-3-phospho-(1D-myo-inositol) + phosphate. It carries out the reaction 1,2-dioctanoyl-sn-glycero-3-phospho-(1D-myo-inositol-3,5-bisphosphate) + H2O = 1,2-dioctanoyl-sn-glycero-3-phospho-(1D-myo-inositol-5-phosphate) + phosphate. The enzyme catalyses 1,2-dioctanoyl-sn-glycero-3-phospho-(1-D-myo-inositol-3-phosphate) + H2O = 1,2-dioctanoyl-sn-glycero-3-phospho-(1D-myo-inositol) + phosphate. With respect to regulation, allosterically activated by phosphatidylserine and/or phosphatidylinositol 4-phosphate (PtdIns(4)P), and phosphatidylinositol 5-phosphate (PtdIns(5)P). Interaction with MTMR9 increases catalytic activity towards phosphatidylinositol 3,5-bisphosphate. Lipid phosphatase that specifically dephosphorylates the D-3 position of phosphatidylinositol 3-phosphate and phosphatidylinositol 3,5-bisphosphate, generating phosphatidylinositol and phosphatidylinositol 5-phosphate. Binds with high affinity to phosphatidylinositol 3,5-bisphosphate (PtdIns(3,5)P2) but also to phosphatidylinositol 3-phosphate (PtdIns(3)P), phosphatidylinositol 4-phosphate (PtdIns(4)P), and phosphatidylinositol 5-phosphate (PtdIns(5)P), phosphatidic acid and phosphatidylserine. Negatively regulates ER-Golgi protein transport. Probably in association with MTMR9, plays a role in the late stages of macropinocytosis by dephosphorylating phosphatidylinositol 3-phosphate in membrane ruffles. Acts as a negative regulator of KCNN4/KCa3.1 channel activity in CD4(+) T-cells possibly by decreasing intracellular levels of phosphatidylinositol 3-phosphate. Negatively regulates proliferation of reactivated CD4(+) T-cells. In complex with MTMR9, negatively regulates DNA damage-induced apoptosis. The formation of the MTMR6-MTMR9 complex stabilizes both MTMR6 and MTMR9 protein levels. The polypeptide is Phosphatidylinositol-3,5-bisphosphate 3-phosphatase MTMR6 (Rattus norvegicus (Rat)).